We begin with the raw amino-acid sequence, 627 residues long: Zinc cluster transcription factor acuM (627 aa).

Disordered regions lie at residues 1–40, 129–148, 155–193, 225–258, 277–305, and 394–416; these read MGCR…PARP, NGTA…GTME, AEGD…RRKV, CHDE…FSNA, PDGT…QNSL, and AQPS…PSST. A compositionally biased stretch (polar residues) spans 162 to 171; the sequence is MESGSKNTAS. Positions 197 to 225 form a DNA-binding region, zn(2)-C6 fungal-type; the sequence is CVYCRRSHMTCDSERPCTRCIKRNIGHLC. The span at 225–251 shows a compositional bias: basic and acidic residues; it reads CHDEPREPSKRARSEHEHSTAEEDGHS. A compositionally biased stretch (polar residues) spans 286–305; sequence SSVSAVQHNTIPSSSAQNSL. Low complexity predominate over residues 394 to 403; sequence AQPSQPTQSQ. A compositionally biased stretch (polar residues) spans 404–416; the sequence is PHQNDSVQGPSST.

The protein resides in the nucleus. Transcription factor that governs genes involved in reductive and siderophore-mediated iron acquisition, and carbon metabolism. Suppresses the expression of sreA and induces hapX to stimulate expression of genes involved in both reductive iron assimilation and siderophore-mediated iron uptake which is essential for the maximal virulence. Also regulates genes involved in gluconeogenesis. The protein is Zinc cluster transcription factor acuM of Aspergillus fumigatus (strain ATCC MYA-4609 / CBS 101355 / FGSC A1100 / Af293) (Neosartorya fumigata).